Reading from the N-terminus, the 366-residue chain is Alanine racemase (366 aa).

The active-site Proton acceptor; specific for D-alanine is Lys-40. Lys-40 carries the N6-(pyridoxal phosphate)lysine modification. Arg-136 is a binding site for substrate. The active-site Proton acceptor; specific for L-alanine is the Tyr-263. A substrate-binding site is contributed by Met-310.

This sequence belongs to the alanine racemase family. It depends on pyridoxal 5'-phosphate as a cofactor.

It catalyses the reaction L-alanine = D-alanine. Its pathway is amino-acid biosynthesis; D-alanine biosynthesis; D-alanine from L-alanine: step 1/1. Catalyzes the interconversion of L-alanine and D-alanine. May also act on other amino acids. This is Alanine racemase (alr) from Streptococcus agalactiae serotype Ia (strain ATCC 27591 / A909 / CDC SS700).